The sequence spans 236 residues: Glucosamine-6-phosphate deaminase (236 aa).

Residue D62 is the Proton acceptor; for enolization step of the active site. Residue N128 is the For ring-opening step of the active site. The Proton acceptor; for ring-opening step role is filled by H130. The active-site For ring-opening step is the E135.

The protein belongs to the glucosamine/galactosamine-6-phosphate isomerase family. NagB subfamily.

The enzyme catalyses alpha-D-glucosamine 6-phosphate + H2O = beta-D-fructose 6-phosphate + NH4(+). It functions in the pathway amino-sugar metabolism; N-acetylneuraminate degradation; D-fructose 6-phosphate from N-acetylneuraminate: step 5/5. In terms of biological role, catalyzes the reversible isomerization-deamination of glucosamine 6-phosphate (GlcN6P) to form fructose 6-phosphate (Fru6P) and ammonium ion. This is Glucosamine-6-phosphate deaminase from Oenococcus oeni (strain ATCC BAA-331 / PSU-1).